The primary structure comprises 72 residues: uncharacterized protein (72 aa).

Residues 51-72 (AKGGRQKGEVVGVDDQCKEHKE) are disordered.

The protein belongs to the YiiE family.

This is an uncharacterized protein from Escherichia coli O157:H7.